A 310-amino-acid chain; its full sequence is Methionyl-tRNA formyltransferase (310 aa).

109–112 is a (6S)-5,6,7,8-tetrahydrofolate binding site; the sequence is SLLP.

This sequence belongs to the Fmt family.

It catalyses the reaction L-methionyl-tRNA(fMet) + (6R)-10-formyltetrahydrofolate = N-formyl-L-methionyl-tRNA(fMet) + (6S)-5,6,7,8-tetrahydrofolate + H(+). In terms of biological role, attaches a formyl group to the free amino group of methionyl-tRNA(fMet). The formyl group appears to play a dual role in the initiator identity of N-formylmethionyl-tRNA by promoting its recognition by IF2 and preventing the misappropriation of this tRNA by the elongation apparatus. The protein is Methionyl-tRNA formyltransferase of Parvibaculum lavamentivorans (strain DS-1 / DSM 13023 / NCIMB 13966).